A 109-amino-acid polypeptide reads, in one-letter code: Staphostatin B (109 aa).

Residues 97–101 (IGTSR) are binds to staphopain B.

Belongs to the protease inhibitor I57 (SspC) family. As to quaternary structure, forms a stable non-covalent complex with prematurely activated/folded SspB.

It localises to the cytoplasm. Its function is as follows. Specifically inhibits the cysteine protease staphopain B (SspB) by blocking the active site of the enzyme. Probably required to protect cytoplasmic proteins from being degraded by prematurely activated/folded prostaphopain B. Also involved in growth capacity, viability and bacterial morphology. This is Staphostatin B (sspC) from Staphylococcus aureus (strain Mu50 / ATCC 700699).